The primary structure comprises 301 residues: Acetylglutamate kinase (301 aa).

Substrate is bound by residues 68–69 (GG), arginine 90, and asparagine 195.

This sequence belongs to the acetylglutamate kinase family. ArgB subfamily.

The protein localises to the cytoplasm. The catalysed reaction is N-acetyl-L-glutamate + ATP = N-acetyl-L-glutamyl 5-phosphate + ADP. It participates in amino-acid biosynthesis; L-arginine biosynthesis; N(2)-acetyl-L-ornithine from L-glutamate: step 2/4. Catalyzes the ATP-dependent phosphorylation of N-acetyl-L-glutamate. This Pseudomonas fluorescens (strain ATCC BAA-477 / NRRL B-23932 / Pf-5) protein is Acetylglutamate kinase.